A 100-amino-acid polypeptide reads, in one-letter code: UPF0213 protein YhbQ (100 aa).

Positions 2–77 constitute a GIY-YIG domain; that stretch reads TPWFLYLIRT…KQLTKRQKER (76 aa).

Belongs to the UPF0213 family.

The sequence is that of UPF0213 protein YhbQ from Shigella dysenteriae serotype 1 (strain Sd197).